Here is a 124-residue protein sequence, read N- to C-terminus: S-adenosylmethionine decarboxylase proenzyme (124 aa).

Catalysis depends on S63, which acts as the Schiff-base intermediate with substrate; via pyruvic acid. Residue S63 is modified to Pyruvic acid (Ser); by autocatalysis. The active-site Proton acceptor; for processing activity is H68. C83 (proton donor; for catalytic activity) is an active-site residue.

This sequence belongs to the prokaryotic AdoMetDC family. Type 1 subfamily. In terms of assembly, heterotetramer of two alpha and two beta chains arranged as a dimer of alpha/beta heterodimers. Pyruvate is required as a cofactor. In terms of processing, is synthesized initially as an inactive proenzyme. Formation of the active enzyme involves a self-maturation process in which the active site pyruvoyl group is generated from an internal serine residue via an autocatalytic post-translational modification. Two non-identical subunits are generated from the proenzyme in this reaction, and the pyruvate is formed at the N-terminus of the alpha chain, which is derived from the carboxyl end of the proenzyme. The post-translation cleavage follows an unusual pathway, termed non-hydrolytic serinolysis, in which the side chain hydroxyl group of the serine supplies its oxygen atom to form the C-terminus of the beta chain, while the remainder of the serine residue undergoes an oxidative deamination to produce ammonia and the pyruvoyl group blocking the N-terminus of the alpha chain.

It carries out the reaction S-adenosyl-L-methionine + H(+) = S-adenosyl 3-(methylsulfanyl)propylamine + CO2. The protein operates within amine and polyamine biosynthesis; S-adenosylmethioninamine biosynthesis; S-adenosylmethioninamine from S-adenosyl-L-methionine: step 1/1. Its function is as follows. Catalyzes the decarboxylation of S-adenosylmethionine to S-adenosylmethioninamine (dcAdoMet), the propylamine donor required for the synthesis of the polyamines spermine and spermidine from the diamine putrescine. This Anoxybacillus flavithermus (strain DSM 21510 / WK1) protein is S-adenosylmethionine decarboxylase proenzyme.